The chain runs to 500 residues: Probable cytosol aminopeptidase (500 aa).

2 residues coordinate Mn(2+): K267 and D272. K279 is a catalytic residue. Positions 290, 349, and 351 each coordinate Mn(2+). R353 is an active-site residue.

The protein belongs to the peptidase M17 family. Mn(2+) serves as cofactor.

It is found in the cytoplasm. The enzyme catalyses Release of an N-terminal amino acid, Xaa-|-Yaa-, in which Xaa is preferably Leu, but may be other amino acids including Pro although not Arg or Lys, and Yaa may be Pro. Amino acid amides and methyl esters are also readily hydrolyzed, but rates on arylamides are exceedingly low.. It carries out the reaction Release of an N-terminal amino acid, preferentially leucine, but not glutamic or aspartic acids.. Its function is as follows. Presumably involved in the processing and regular turnover of intracellular proteins. Catalyzes the removal of unsubstituted N-terminal amino acids from various peptides. In Tolumonas auensis (strain DSM 9187 / NBRC 110442 / TA 4), this protein is Probable cytosol aminopeptidase.